We begin with the raw amino-acid sequence, 395 residues long: MAKEKYDRSKPHLNIGTIGHVDHGKTTLTAAITKVMADAGYSEASAFDQIDNAPEEKERGITINSSHVEYSTEKRHYAHVDCPGHADYVKNMVTGAAQMDGAILVVAATDGPMPQTREHILLGRQVGIPRIVVFLNKVDLVDDEELLELVEMEVRDLLSFYEYDGDNGPVISGSALGALEGDEKWSKTVLELMEAVDTWIELPERDVDKAFLMPIEDVFSITGRGTVATGRIETGVANTGDPIEIIGMGAGKLTSTITGVEMFRKILDRGEAGDNVGILLRGIEKSQISRGMVITKPGSVTPHAKFKAEVYILKKEEGGRHTPFHNNYRPQFYVRTTDVTGTISLPDGVEMVMPGDNLTITVELIQAIAMNQGLRFAIREGGRTVGAGQVTEILD.

A tr-type G domain is found at Lys-10–Glu-204. The tract at residues Gly-19–Thr-26 is G1. Gly-19 to Thr-26 contributes to the GTP binding site. A Mg(2+)-binding site is contributed by Thr-26. The tract at residues Gly-60–Asn-64 is G2. The tract at residues Asp-81 to Gly-84 is G3. GTP contacts are provided by residues Asp-81–His-85 and Asn-136–Asp-139. The segment at Asn-136–Asp-139 is G4. The tract at residues Ser-174 to Leu-176 is G5.

It belongs to the TRAFAC class translation factor GTPase superfamily. Classic translation factor GTPase family. EF-Tu/EF-1A subfamily. As to quaternary structure, monomer.

The protein localises to the cytoplasm. It carries out the reaction GTP + H2O = GDP + phosphate + H(+). Functionally, GTP hydrolase that promotes the GTP-dependent binding of aminoacyl-tRNA to the A-site of ribosomes during protein biosynthesis. The chain is Elongation factor Tu from Christiangramia forsetii (strain DSM 17595 / CGMCC 1.15422 / KT0803) (Gramella forsetii).